We begin with the raw amino-acid sequence, 85 residues long: LYR motif-containing protein 5A (85 aa).

This sequence belongs to the complex I LYR family.

The polypeptide is LYR motif-containing protein 5A (lyrm5a) (Danio rerio (Zebrafish)).